The following is a 789-amino-acid chain: Cadherin-6 (789 aa).

An N-terminal signal peptide occupies residues 1 to 18 (MRTYRYFLLLFWVGQPYP). The propeptide occupies 19–53 (TFSNPLSKRTSGFPAKRRALELSANSRNELSRSKR). 5 consecutive Cadherin domains span residues 54–159 (SWMW…EPIF), 160–268 (TKDV…PPRF), 269–383 (PQST…PPVF), 384–486 (SKPA…DNAP), and 487–608 (EFAE…LIHP). At 54-615 (SWMWNQFFLL…IHPTGLSTGA (562 aa)) the chain is on the extracellular side. N255 carries N-linked (GlcNAc...) asparagine glycosylation. The disordered stretch occupies residues 259 to 288 (TDVNDNPPRFPQSTYQFKTPESSPPGTPIG). Residues 269 to 279 (PQSTYQFKTPE) show a composition bias toward polar residues. N-linked (GlcNAc...) asparagine glycans are attached at residues N399, N437, N455, and N536. The chain crosses the membrane as a helical span at residues 616-636 (LVAILLCIVILLVTVVLFAAL). Over 637–789 (RRQRKKEPLI…YGGMDSDKDS (153 aa)) the chain is Cytoplasmic. S785 and S789 each carry phosphoserine.

In terms of tissue distribution, highly expressed in kidney and brain.

It is found in the cell membrane. Cadherins are calcium-dependent cell adhesion proteins. They preferentially interact with themselves in a homophilic manner in connecting cells; cadherins may thus contribute to the sorting of heterogeneous cell types. This Rattus norvegicus (Rat) protein is Cadherin-6 (Cdh6).